The sequence spans 205 residues: Probable GTP-binding protein EngB (205 aa).

The EngB-type G domain occupies 27–201; sequence EGMEIAFAGR…AAKLDSWFSS (175 aa). GTP-binding positions include 35-42, 62-66, 80-83, 147-150, and 180-182; these read GRSNAGKS, GRTQL, DLPG, TKAD, and FSA. Mg(2+)-binding residues include S42 and T64.

Belongs to the TRAFAC class TrmE-Era-EngA-EngB-Septin-like GTPase superfamily. EngB GTPase family. Requires Mg(2+) as cofactor.

In terms of biological role, necessary for normal cell division and for the maintenance of normal septation. This chain is Probable GTP-binding protein EngB, found in Mannheimia succiniciproducens (strain KCTC 0769BP / MBEL55E).